A 618-amino-acid chain; its full sequence is Beta-xylosidase (618 aa).

Disordered regions lie at residues 76 to 100 (ERDR…QEES) and 463 to 509 (LEPQ…PPIQ).

The protein belongs to the glycosyl hydrolase 52 family.

It is found in the secreted. The enzyme catalyses Hydrolysis of (1-&gt;4)-beta-D-xylans, to remove successive D-xylose residues from the non-reducing termini.. The protein operates within glycan degradation; xylan degradation. The sequence is that of Beta-xylosidase (xylA) from Geobacillus stearothermophilus (Bacillus stearothermophilus).